Reading from the N-terminus, the 293-residue chain is Lysosomal amino acid transporter 1 homolog (293 aa).

Topologically, residues 1–37 (MVWRTLGASNFSTCPNGSVQWIWDVFGECAQDGWDEA) are lumenal. Residues Asn-10 and Asn-16 are each glycosylated (N-linked (GlcNAc...) asparagine). One can recognise a PQ-loop 1 domain in the interval 34–100 (WDEASVGLGL…LADQLPLQTY (67 aa)). The chain crosses the membrane as a helical span at residues 38–58 (SVGLGLVSILCFAASTFPQYI). Residues 59–71 (KACKTGNMDQALS) lie on the Cytoplasmic side of the membrane. Residues 72 to 92 (LWFLLGWIGGDSCNLIGSFLA) form a helical membrane-spanning segment. Residues 93-96 (DQLP) lie on the Lumenal side of the membrane. The chain crosses the membrane as a helical span at residues 97-117 (LQTYTAVYYVLADLMMLTLYF). The Cytoplasmic segment spans residues 118–127 (HYKFKKRPSP). Residues 128-148 (LSAPINSVLLFILGTVCITPL) form a helical membrane-spanning segment. The Lumenal portion of the chain corresponds to 149-182 (LSSTDPVAVPREGFRGRTLLSVEPGNKPFTKKEV). A helical transmembrane segment spans residues 183–203 (IGFVIGSASSLLYLLSRLPQI). The region spanning 191–243 (SSLLYLLSRLPQIRTNFIRQSTQGISYSLFALVMLGNTLYGLSVLLKNPEVGQ) is the PQ-loop 2 domain. The Cytoplasmic segment spans residues 204 to 214 (RTNFIRQSTQG). The chain crosses the membrane as a helical span at residues 215-235 (ISYSLFALVMLGNTLYGLSVL). The Lumenal portion of the chain corresponds to 236–254 (LKNPEVGQSEGSYLLHHLP). A helical transmembrane segment spans residues 255-275 (WLVGSLGVLLLDTIISIQFLV). The Cytoplasmic segment spans residues 276–293 (YRSHETAAASEREPLLPS). The short motif at 290 to 291 (LL) is the Di-leucine motif element.

The protein belongs to the laat-1 family. In terms of tissue distribution, ubiquitously expressed.

It is found in the lysosome membrane. In terms of biological role, amino acid transporter that specifically mediates the pH-dependent export of the cationic amino acids arginine, histidine and lysine from lysosomes. The chain is Lysosomal amino acid transporter 1 homolog from Mus musculus (Mouse).